The sequence spans 152 residues: MSRFVFILLCFIPYLGRADCWDKAGERYNIPSSLLKAIAEKESGFNKFAVNVNNNGSKDYGIMQINDFHSKRLREMGYSEEMLISHPCLSVHYAAKLLNEFMMMYGRGWEAVGAYNAGTSPKKKKERLKYAEDIYRRYLRIAAESKQNNRRI.

The signal sequence occupies residues 1 to 17 (MSRFVFILLCFIPYLGR).

The protein belongs to the IagB/IpgF/P19 family.

The chain is Protein IpgF (ipgF) from Shigella sonnei.